Reading from the N-terminus, the 189-residue chain is ATP-dependent protease subunit HslV (189 aa).

Thr12 is an active-site residue. Ser172, Cys175, and Thr178 together coordinate Na(+).

This sequence belongs to the peptidase T1B family. HslV subfamily. As to quaternary structure, a double ring-shaped homohexamer of HslV is capped on each side by a ring-shaped HslU homohexamer. The assembly of the HslU/HslV complex is dependent on binding of ATP.

Its subcellular location is the cytoplasm. It catalyses the reaction ATP-dependent cleavage of peptide bonds with broad specificity.. Allosterically activated by HslU binding. Functionally, protease subunit of a proteasome-like degradation complex believed to be a general protein degrading machinery. The chain is ATP-dependent protease subunit HslV from Ehrlichia canis (strain Jake).